Here is a 396-residue protein sequence, read N- to C-terminus: Elongation factor Tu (396 aa).

The 197-residue stretch at 10–206 (KPHVNVGTIG…ALDTYIPTPE (197 aa)) folds into the tr-type G domain. The G1 stretch occupies residues 19 to 26 (GHVDHGKT). Position 19–26 (19–26 (GHVDHGKT)) interacts with GTP. T26 serves as a coordination point for Mg(2+). A G2 region spans residues 60 to 64 (GITIN). The interval 81–84 (DCPG) is G3. Residues 81–85 (DCPGH) and 136–139 (NKAD) each bind GTP. A G4 region spans residues 136 to 139 (NKAD). Residues 174–176 (SAK) form a G5 region.

The protein belongs to the TRAFAC class translation factor GTPase superfamily. Classic translation factor GTPase family. EF-Tu/EF-1A subfamily. Monomer.

The protein resides in the cytoplasm. The enzyme catalyses GTP + H2O = GDP + phosphate + H(+). Functionally, GTP hydrolase that promotes the GTP-dependent binding of aminoacyl-tRNA to the A-site of ribosomes during protein biosynthesis. The chain is Elongation factor Tu from Bordetella avium (strain 197N).